A 213-amino-acid polypeptide reads, in one-letter code: Thiamine-phosphate synthase (213 aa).

4-amino-2-methyl-5-(diphosphooxymethyl)pyrimidine-binding positions include 40–44 and Asn-75; that span reads QFREK. Asp-76 and Asp-95 together coordinate Mg(2+). Ser-113 provides a ligand contact to 4-amino-2-methyl-5-(diphosphooxymethyl)pyrimidine. 139-141 lines the 2-[(2R,5Z)-2-carboxy-4-methylthiazol-5(2H)-ylidene]ethyl phosphate pocket; it reads TPS. Lys-142 contacts 4-amino-2-methyl-5-(diphosphooxymethyl)pyrimidine. Residues Gly-171 and 191-192 contribute to the 2-[(2R,5Z)-2-carboxy-4-methylthiazol-5(2H)-ylidene]ethyl phosphate site; that span reads IS.

Belongs to the thiamine-phosphate synthase family. It depends on Mg(2+) as a cofactor.

It catalyses the reaction 2-[(2R,5Z)-2-carboxy-4-methylthiazol-5(2H)-ylidene]ethyl phosphate + 4-amino-2-methyl-5-(diphosphooxymethyl)pyrimidine + 2 H(+) = thiamine phosphate + CO2 + diphosphate. The catalysed reaction is 2-(2-carboxy-4-methylthiazol-5-yl)ethyl phosphate + 4-amino-2-methyl-5-(diphosphooxymethyl)pyrimidine + 2 H(+) = thiamine phosphate + CO2 + diphosphate. It carries out the reaction 4-methyl-5-(2-phosphooxyethyl)-thiazole + 4-amino-2-methyl-5-(diphosphooxymethyl)pyrimidine + H(+) = thiamine phosphate + diphosphate. The protein operates within cofactor biosynthesis; thiamine diphosphate biosynthesis; thiamine phosphate from 4-amino-2-methyl-5-diphosphomethylpyrimidine and 4-methyl-5-(2-phosphoethyl)-thiazole: step 1/1. Its function is as follows. Condenses 4-methyl-5-(beta-hydroxyethyl)thiazole monophosphate (THZ-P) and 2-methyl-4-amino-5-hydroxymethyl pyrimidine pyrophosphate (HMP-PP) to form thiamine monophosphate (TMP). This chain is Thiamine-phosphate synthase, found in Staphylococcus aureus (strain MSSA476).